The following is a 679-amino-acid chain: Membrane-spanning 4-domains subfamily A member 14 (679 aa).

Transmembrane regions (helical) follow at residues 50–70 (ILLA…YIGF), 76–96 (LVVL…TGYL), 110–130 (VTGM…FTIL), and 141–161 (MPSF…LFFL). 4 disordered regions span residues 218-259 (VSQP…EKKP), 331-363 (SEQT…ILSQ), 469-491 (KEWK…LNQQ), and 505-633 (VQAK…QAQV). Over residues 224–234 (KGREFVPDEQK) the composition is skewed to basic and acidic residues. A compositionally biased stretch (low complexity) spans 337-348 (SKSTSSHVKQSS). Basic and acidic residues predominate over residues 469-478 (KEWKSEEELH). Composition is skewed to polar residues over residues 519 to 535 (DQQS…SLDQ) and 550 to 563 (KQAQ…QLPD). Positions 580-601 (QSKDGQVKDQQTDKEQNSKKQT) are enriched in basic and acidic residues. Polar residues predominate over residues 619-632 (GQFQNVQAEGQQAQ).

This sequence belongs to the MS4A family.

Its subcellular location is the membrane. In terms of biological role, may be involved in signal transduction as a component of a multimeric receptor complex. In Homo sapiens (Human), this protein is Membrane-spanning 4-domains subfamily A member 14 (MS4A14).